Consider the following 23-residue polypeptide: Acidic phospholipase A2 CTs-A2 (23 aa).

Requires Ca(2+) as cofactor. Post-translationally, contains 7 disulfide bonds. In terms of tissue distribution, expressed by the venom gland.

Its subcellular location is the secreted. It carries out the reaction a 1,2-diacyl-sn-glycero-3-phosphocholine + H2O = a 1-acyl-sn-glycero-3-phosphocholine + a fatty acid + H(+). Functionally, snake venom phospholipase A2 (PLA2) that shows a moderate inhibition of ADP-induced human platelet aggregation when tested on platelet rich plasma. Exhibits moderate hydrolytic activities and prefers the anionic micelles (dPPC with deoxycholate) to the zwitterionic micelles (dPPC with Triton X-100). PLA2 catalyzes the calcium-dependent hydrolysis of the 2-acyl groups in 3-sn-phosphoglycerides. This chain is Acidic phospholipase A2 CTs-A2, found in Trimeresurus stejnegeri (Chinese green tree viper).